A 450-amino-acid polypeptide reads, in one-letter code: Phosphoglucosamine mutase (450 aa).

S102 functions as the Phosphoserine intermediate in the catalytic mechanism. The Mg(2+) site is built by S102, D243, D245, and D247. S102 bears the Phosphoserine mark.

This sequence belongs to the phosphohexose mutase family. Mg(2+) is required as a cofactor. Post-translationally, activated by phosphorylation.

It catalyses the reaction alpha-D-glucosamine 1-phosphate = D-glucosamine 6-phosphate. Its function is as follows. Catalyzes the conversion of glucosamine-6-phosphate to glucosamine-1-phosphate. The polypeptide is Phosphoglucosamine mutase (Rhizobium leguminosarum bv. trifolii (strain WSM2304)).